Reading from the N-terminus, the 141-residue chain is Nucleoside diphosphate kinase (141 aa).

ATP-binding residues include K9, F57, R85, T91, R102, and N112. The active-site Pros-phosphohistidine intermediate is H115.

This sequence belongs to the NDK family. Homotetramer. The cofactor is Mg(2+).

It localises to the cytoplasm. The catalysed reaction is a 2'-deoxyribonucleoside 5'-diphosphate + ATP = a 2'-deoxyribonucleoside 5'-triphosphate + ADP. It catalyses the reaction a ribonucleoside 5'-diphosphate + ATP = a ribonucleoside 5'-triphosphate + ADP. Functionally, major role in the synthesis of nucleoside triphosphates other than ATP. The ATP gamma phosphate is transferred to the NDP beta phosphate via a ping-pong mechanism, using a phosphorylated active-site intermediate. The chain is Nucleoside diphosphate kinase from Chlamydia muridarum (strain MoPn / Nigg).